Consider the following 352-residue polypeptide: Molybdenum import ATP-binding protein ModC (352 aa).

In terms of domain architecture, ABC transporter spans 1–229 (MLELNFSQTL…SVMHPWLPKE (229 aa)). 31-38 (GVSGAGKT) lines the ATP pocket. The 64-residue stretch at 289–352 (QTSIRNVLRA…AQVKSVSITA (64 aa)) folds into the Mop domain.

Belongs to the ABC transporter superfamily. Molybdate importer (TC 3.A.1.8) family. As to quaternary structure, the complex is composed of two ATP-binding proteins (ModC), two transmembrane proteins (ModB) and a solute-binding protein (ModA).

The protein localises to the cell inner membrane. It catalyses the reaction molybdate(out) + ATP + H2O = molybdate(in) + ADP + phosphate + H(+). Functionally, part of the ABC transporter complex ModABC involved in molybdenum import. Responsible for energy coupling to the transport system. The chain is Molybdenum import ATP-binding protein ModC from Salmonella paratyphi A (strain ATCC 9150 / SARB42).